The chain runs to 49 residues: MGKRKANHTISGMNAASAQGQGTGYNEEFANEPLTPAERQNNKKRKKNQ.

Positions 1-49 (MGKRKANHTISGMNAASAQGQGTGYNEEFANEPLTPAERQNNKKRKKNQ) are disordered. A compositionally biased stretch (polar residues) spans 8-20 (HTISGMNAASAQG).

The protein belongs to the SspO family.

The protein resides in the spore core. This Bacillus cereus (strain B4264) protein is Small, acid-soluble spore protein O.